Consider the following 100-residue polypeptide: MARKSLIQREKKRQKLEQKYHLIRQSLKNEISKVPSLSEKWEIHGKLQSPPRNSAPTRLHRRCFLTGRPRANYRDFGLSGHILREMVHACLLPGATRSSW.

This sequence belongs to the universal ribosomal protein uS14 family. As to quaternary structure, part of the 30S ribosomal subunit.

The protein localises to the plastid. Its subcellular location is the chloroplast. In terms of biological role, binds 16S rRNA, required for the assembly of 30S particles. The polypeptide is Small ribosomal subunit protein uS14c (Cucumis sativus (Cucumber)).